A 156-amino-acid polypeptide reads, in one-letter code: Probable cyclic pyranopterin monophosphate synthase (156 aa).

Position 109–110 (109–110 (MD)) interacts with substrate. Asp-124 is an active-site residue.

It belongs to the MoaC family. Homohexamer; trimer of dimers.

The catalysed reaction is (8S)-3',8-cyclo-7,8-dihydroguanosine 5'-triphosphate = cyclic pyranopterin phosphate + diphosphate. It functions in the pathway cofactor biosynthesis; molybdopterin biosynthesis. In terms of biological role, catalyzes the conversion of (8S)-3',8-cyclo-7,8-dihydroguanosine 5'-triphosphate to cyclic pyranopterin monophosphate (cPMP). In Methanopyrus kandleri (strain AV19 / DSM 6324 / JCM 9639 / NBRC 100938), this protein is Probable cyclic pyranopterin monophosphate synthase.